The sequence spans 101 residues: Protein TraL (101 aa).

Its subcellular location is the cell outer membrane. Functionally, membrane protein involved in F pilin formation. The protein is Protein TraL (traL) of Salmonella typhi.